The chain runs to 473 residues: H(+)/Cl(-) exchange transporter ClcA (473 aa).

The Cytoplasmic segment spans residues 1 to 32 (MKTDTPSLETPQAARLRRRQLIRQLLERDKTP). The chain crosses the membrane as a helical span at residues 33 to 69 (LAILFMAAVVGTLVGLAAVAFDKGVAWLQNQRMEALV). Residues 70–76 (HTADNYP) lie on the Periplasmic side of the membrane. Residues 77-100 (LLLTVAFLCSAVLAMFGYFLVRKY) traverse the membrane as a helical segment. The Selectivity filter part_1 motif lies at 106-110 (GSGIP). Ser-107 provides a ligand contact to chloride. Residues 109-116 (IPEIEGAL) constitute an intramembrane region (helical). Residues 117–123 (EDQRPVR) are Cytoplasmic-facing. The next 2 membrane-spanning stretches (helical) occupy residues 124–141 (WWRV…TLGG) and 148–166 (EGPT…LDIF). Residues 146 to 150 (GREGP) carry the Selectivity filter part_2 motif. The Cytoplasmic segment spans residues 167–176 (RLKGDEARHT). Intramembrane regions (helical) lie at residues 177-189 (LLAT…LAAA) and 193-201 (PLAGILFII). Residues 202 to 214 (EEMRPQFRYTLIS) lie on the Cytoplasmic side of the membrane. The helical transmembrane segment at 215-232 (IKAVFIGVIMSTIMYRIF) threads the bilayer. Topologically, residues 233-252 (NHEVALIDVGKLSDAPLNTL) are periplasmic. A helical transmembrane segment spans residues 253–281 (WLYLILGIIFGIFGPIFNKWVLGMQDLLH). Topologically, residues 282 to 287 (RVHGGN) are cytoplasmic. A helical membrane pass occupies residues 288–309 (ITKWVLMGGAIGGLCGLLGFVA). Residues 310–329 (PATSGGGFNLIPIATAGNFS) are Periplasmic-facing. The next 2 membrane-spanning stretches (helical) occupy residues 330–349 (MGML…LCFS) and 355–376 (GIFA…MVVV). Positions 355–359 (GIFAP) match the Selectivity filter part_3 motif. Ile-356 and Phe-357 together coordinate chloride. Topologically, residues 377–386 (ELFPQYHLEA) are periplasmic. The segment at residues 387–401 (GTFAIAGMGALLAAS) is an intramembrane region (helical). Residues 402 to 404 (IRA) constitute an intramembrane region (note=Loop between two helices). The helical intramembrane region spans 405-416 (PLTGIILVLEMT). Positions 417–421 (DNYQL) form an intramembrane region, note=Loop between two helices. A helical transmembrane segment spans residues 422–438 (ILPMIITGLGATLLAQF). Residues 439-473 (TGGKPLYSEILARTLAKQEAEQLARSKAASASENT) lie on the Cytoplasmic side of the membrane. A chloride-binding site is contributed by Tyr-445.

Belongs to the chloride channel (TC 2.A.49) family. ClcA subfamily. In terms of assembly, homodimer.

The protein localises to the cell inner membrane. It catalyses the reaction 2 chloride(in) + H(+)(out) = 2 chloride(out) + H(+)(in). Functionally, proton-coupled chloride transporter. Functions as antiport system and exchanges two chloride ions for 1 proton. Probably acts as an electrical shunt for an outwardly-directed proton pump that is linked to amino acid decarboxylation, as part of the extreme acid resistance (XAR) response. The polypeptide is H(+)/Cl(-) exchange transporter ClcA (Shigella boydii serotype 4 (strain Sb227)).